A 360-amino-acid polypeptide reads, in one-letter code: Photosystem II protein D1 1 (360 aa).

The Cytoplasmic portion of the chain corresponds to 2–31 (TTTLQRRESANLWERFCNWVTSTDNRLYVG). The chain crosses the membrane as a helical span at residues 32–53 (WFGVIMIPTLLAATICFVIAFI). Over 54 to 110 (AAPPVDIDGIREPVSGSLLYGNNIITGAVVPSSNAIGLHFYPIWEAASLDEWLYNGG) the chain is Lumenal. The helical transmembrane segment at 111 to 132 (PYQLIIFHFLLGASCYMGRQWE) threads the bilayer. His118 provides a ligand contact to chlorophyll a. Pheophytin a-binding residues include Tyr126 and Gln130. Topologically, residues 133-142 (LSYRLGMRPW) are cytoplasmic. The chain crosses the membrane as a helical span at residues 143 to 163 (ICVAYSAPLASAFAVFLIYPI). Pheophytin a is bound at residue Tyr147. The Lumenal segment spans residues 164–191 (GQGSFSDGMPLGISGTFNFMIVFQAEHN). Residues Asp170 and Glu189 each contribute to the [CaMn4O5] cluster site. A helical membrane pass occupies residues 192-217 (ILMHPFHQLGVAGVFGGALFCAMHGS). Residue His198 coordinates chlorophyll a. A quinone is bound by residues His215 and 264-265 (SF). Residue His215 coordinates Fe cation. Over 218 to 272 (LVTSSLIRETTETESANYGYKFGQEEETYNIVAAHGYFGRLIFQYASFNNSRSLH) the chain is Cytoplasmic. His272 lines the Fe cation pocket. Residues 273-295 (FFLAAWPVVGVWFTALGISTMAF) form a helical membrane-spanning segment. At 296 to 344 (NLNGFNFNHSVIDAKGNVINTWADIINRANLGMEVMHERNAHNFPLDLA) the chain is on the lumenal side. [CaMn4O5] cluster-binding residues include His332, Glu333, Asp342, and Ala344. Positions 345–360 (SAESAPVAMIAPSING) are excised as a propeptide.

It belongs to the reaction center PufL/M/PsbA/D family. In terms of assembly, PSII is composed of 1 copy each of membrane proteins PsbA, PsbB, PsbC, PsbD, PsbE, PsbF, PsbH, PsbI, PsbJ, PsbK, PsbL, PsbM, PsbT, PsbX, PsbY, PsbZ, Psb30/Ycf12, peripheral proteins PsbO, CyanoQ (PsbQ), PsbU, PsbV and a large number of cofactors. It forms dimeric complexes. Precursor protein interacts with Ycf48. Part of a photosystem II (PSII) assembly intermediate complex PSII-I; crystallized from a strain deleted of psbJ, it forms monomeric PSII before addition of the oxygen evolving complex. PSII-I includes 3 assembly factors not found in mature PSII (Psb27, Psb28 and Psb34). In PSII-I the C-terminus of D1 (this subunit) is already processed but not yet found at its final position. The D1/D2 heterodimer binds P680, chlorophylls that are the primary electron donor of PSII, and subsequent electron acceptors. It shares a non-heme iron and each subunit binds pheophytin, quinone, additional chlorophylls, carotenoids and lipids. D1 provides most of the ligands for the Mn4-Ca-O5 cluster of the oxygen-evolving complex (OEC). There is also a Cl(-1) ion associated with D1 and D2, which is required for oxygen evolution. PSII binds additional chlorophylls, carotenoids and specific lipids. serves as cofactor. In terms of processing, C-terminally processed by CtpA; processing is essential to allow assembly of the oxygen-evolving complex and thus photosynthetic growth. Tyr-161 forms a radical intermediate that is referred to as redox-active TyrZ, YZ or Y-Z.

The protein localises to the cellular thylakoid membrane. It carries out the reaction 2 a plastoquinone + 4 hnu + 2 H2O = 2 a plastoquinol + O2. Functionally, photosystem II (PSII) is a light-driven water:plastoquinone oxidoreductase that uses light energy to abstract electrons from H(2)O, generating O(2) and a proton gradient subsequently used for ATP formation. It consists of a core antenna complex that captures photons, and an electron transfer chain that converts photonic excitation into a charge separation. The D1/D2 (PsbA/PsbD) reaction center heterodimer binds P680, the primary electron donor of PSII as well as several subsequent electron acceptors. In Thermosynechococcus vestitus (strain NIES-2133 / IAM M-273 / BP-1), this protein is Photosystem II protein D1 1.